A 338-amino-acid chain; its full sequence is Ketol-acid reductoisomerase (NADP(+)) (338 aa).

A KARI N-terminal Rossmann domain is found at 1–181 (MNVYYDKDCD…GGGRSGIIET (181 aa)). NADP(+)-binding positions include 24–27 (YGSQ), Arg47, Ser50, Ser52, and 82–85 (DEFQ). His107 is a catalytic residue. An NADP(+)-binding site is contributed by Gly133. Positions 182-327 (TFKDETETDL…AKLRGMMPWI (146 aa)) constitute a KARI C-terminal knotted domain. Mg(2+) is bound by residues Asp190, Glu194, Glu226, and Glu230. Ser251 serves as a coordination point for substrate.

Belongs to the ketol-acid reductoisomerase family. It depends on Mg(2+) as a cofactor.

The enzyme catalyses (2R)-2,3-dihydroxy-3-methylbutanoate + NADP(+) = (2S)-2-acetolactate + NADPH + H(+). It catalyses the reaction (2R,3R)-2,3-dihydroxy-3-methylpentanoate + NADP(+) = (S)-2-ethyl-2-hydroxy-3-oxobutanoate + NADPH + H(+). It functions in the pathway amino-acid biosynthesis; L-isoleucine biosynthesis; L-isoleucine from 2-oxobutanoate: step 2/4. It participates in amino-acid biosynthesis; L-valine biosynthesis; L-valine from pyruvate: step 2/4. Functionally, involved in the biosynthesis of branched-chain amino acids (BCAA). Catalyzes an alkyl-migration followed by a ketol-acid reduction of (S)-2-acetolactate (S2AL) to yield (R)-2,3-dihydroxy-isovalerate. In the isomerase reaction, S2AL is rearranged via a Mg-dependent methyl migration to produce 3-hydroxy-3-methyl-2-ketobutyrate (HMKB). In the reductase reaction, this 2-ketoacid undergoes a metal-dependent reduction by NADPH to yield (R)-2,3-dihydroxy-isovalerate. In Psychrobacter arcticus (strain DSM 17307 / VKM B-2377 / 273-4), this protein is Ketol-acid reductoisomerase (NADP(+)).